Here is a 482-residue protein sequence, read N- to C-terminus: tRNA sulfurtransferase (482 aa).

Residues 61 to 165 form the THUMP domain; it reads LAIRDALTRI…DDRLLLIKGR (105 aa). Residues 183 to 184, Lys265, Gly287, and Gln296 each bind ATP; that span reads LI. Residues Cys344 and Cys456 are joined by a disulfide bond. The Rhodanese domain maps to 404-482; sequence FGPNDVILDI…GFQNVKVYRP (79 aa). Cys456 (cysteine persulfide intermediate) is an active-site residue.

It belongs to the ThiI family.

It is found in the cytoplasm. The catalysed reaction is [ThiI sulfur-carrier protein]-S-sulfanyl-L-cysteine + a uridine in tRNA + 2 reduced [2Fe-2S]-[ferredoxin] + ATP + H(+) = [ThiI sulfur-carrier protein]-L-cysteine + a 4-thiouridine in tRNA + 2 oxidized [2Fe-2S]-[ferredoxin] + AMP + diphosphate. It catalyses the reaction [ThiS sulfur-carrier protein]-C-terminal Gly-Gly-AMP + S-sulfanyl-L-cysteinyl-[cysteine desulfurase] + AH2 = [ThiS sulfur-carrier protein]-C-terminal-Gly-aminoethanethioate + L-cysteinyl-[cysteine desulfurase] + A + AMP + 2 H(+). The protein operates within cofactor biosynthesis; thiamine diphosphate biosynthesis. Its function is as follows. Catalyzes the ATP-dependent transfer of a sulfur to tRNA to produce 4-thiouridine in position 8 of tRNAs, which functions as a near-UV photosensor. Also catalyzes the transfer of sulfur to the sulfur carrier protein ThiS, forming ThiS-thiocarboxylate. This is a step in the synthesis of thiazole, in the thiamine biosynthesis pathway. The sulfur is donated as persulfide by IscS. The polypeptide is tRNA sulfurtransferase (Citrobacter koseri (strain ATCC BAA-895 / CDC 4225-83 / SGSC4696)).